Consider the following 72-residue polypeptide: Large ribosomal subunit protein uL29 (72 aa).

This sequence belongs to the universal ribosomal protein uL29 family.

The chain is Large ribosomal subunit protein uL29 from Prochlorococcus marinus (strain MIT 9312).